The primary structure comprises 304 residues: UDP-3-O-acyl-N-acetylglucosamine deacetylase (304 aa).

Zn(2+) is bound by residues H78, H237, and D241. The Proton donor role is filled by H264.

This sequence belongs to the LpxC family. Zn(2+) serves as cofactor.

The enzyme catalyses a UDP-3-O-[(3R)-3-hydroxyacyl]-N-acetyl-alpha-D-glucosamine + H2O = a UDP-3-O-[(3R)-3-hydroxyacyl]-alpha-D-glucosamine + acetate. The protein operates within glycolipid biosynthesis; lipid IV(A) biosynthesis; lipid IV(A) from (3R)-3-hydroxytetradecanoyl-[acyl-carrier-protein] and UDP-N-acetyl-alpha-D-glucosamine: step 2/6. In terms of biological role, catalyzes the hydrolysis of UDP-3-O-myristoyl-N-acetylglucosamine to form UDP-3-O-myristoylglucosamine and acetate, the committed step in lipid A biosynthesis. This is UDP-3-O-acyl-N-acetylglucosamine deacetylase from Nitrosococcus oceani (strain ATCC 19707 / BCRC 17464 / JCM 30415 / NCIMB 11848 / C-107).